The following is a 706-amino-acid chain: Elongation factor G (706 aa).

One can recognise a tr-type G domain in the interval 15–291 (LKTRNIGISA…GVLDYLASPV (277 aa)). Residues 24–31 (AHIDSGKT), 91–95 (DTPGH), and 145–148 (NKLD) each bind GTP.

Belongs to the TRAFAC class translation factor GTPase superfamily. Classic translation factor GTPase family. EF-G/EF-2 subfamily.

It localises to the cytoplasm. Functionally, catalyzes the GTP-dependent ribosomal translocation step during translation elongation. During this step, the ribosome changes from the pre-translocational (PRE) to the post-translocational (POST) state as the newly formed A-site-bound peptidyl-tRNA and P-site-bound deacylated tRNA move to the P and E sites, respectively. Catalyzes the coordinated movement of the two tRNA molecules, the mRNA and conformational changes in the ribosome. This Leptospira borgpetersenii serovar Hardjo-bovis (strain JB197) protein is Elongation factor G.